The chain runs to 436 residues: Protein translocase subunit SecY (436 aa).

Transmembrane regions (helical) follow at residues 18–38 (IAFTLGLIAVYRMGDFVPATG), 69–89 (LLQVSVFALGIMPYITASIIV), 116–138 (YTRYLTLALALLQATTMASLART), 154–174 (ILTVLLVVIALTTGCLIVMWF), 187–207 (MSLLIFTSIAAGFPAGLGQVV), 214–234 (VFAIVMGIGLLTMLAIVFVEE), 266–286 (MANVIPVIFASSVLMLPGILI), 314–334 (PVYMALYFLLIIGFTYFYVSI), 375–395 (VVGALYLGIVAMIPLIAFAVI), and 396–416 (GTSQNFPLGGTSILIMVGVGL).

This sequence belongs to the SecY/SEC61-alpha family. Component of the Sec protein translocase complex. Heterotrimer consisting of SecY, SecE and SecG subunits. The heterotrimers can form oligomers, although 1 heterotrimer is thought to be able to translocate proteins. Interacts with the ribosome. Interacts with SecDF, and other proteins may be involved. Interacts with SecA.

The protein resides in the cell membrane. In terms of biological role, the central subunit of the protein translocation channel SecYEG. Consists of two halves formed by TMs 1-5 and 6-10. These two domains form a lateral gate at the front which open onto the bilayer between TMs 2 and 7, and are clamped together by SecE at the back. The channel is closed by both a pore ring composed of hydrophobic SecY resides and a short helix (helix 2A) on the extracellular side of the membrane which forms a plug. The plug probably moves laterally to allow the channel to open. The ring and the pore may move independently. The chain is Protein translocase subunit SecY from Micrococcus luteus (Micrococcus lysodeikticus).